A 261-amino-acid chain; its full sequence is Carnitinyl-CoA dehydratase (261 aa).

Glu-111 acts as the Nucleophile in catalysis. Glu-131 functions as the Proton acceptor in the catalytic mechanism.

This sequence belongs to the enoyl-CoA hydratase/isomerase family.

It carries out the reaction (R)-carnitinyl-CoA = crotonobetainyl-CoA + H2O. It participates in amine and polyamine metabolism; carnitine metabolism. In terms of biological role, catalyzes the reversible dehydration of L-carnitinyl-CoA to crotonobetainyl-CoA. This is Carnitinyl-CoA dehydratase from Escherichia coli O6:K15:H31 (strain 536 / UPEC).